A 351-amino-acid polypeptide reads, in one-letter code: UDP-3-O-acylglucosamine N-acyltransferase (351 aa).

His240 acts as the Proton acceptor in catalysis.

The protein belongs to the transferase hexapeptide repeat family. LpxD subfamily. In terms of assembly, homotrimer.

It carries out the reaction a UDP-3-O-[(3R)-3-hydroxyacyl]-alpha-D-glucosamine + a (3R)-hydroxyacyl-[ACP] = a UDP-2-N,3-O-bis[(3R)-3-hydroxyacyl]-alpha-D-glucosamine + holo-[ACP] + H(+). Its pathway is bacterial outer membrane biogenesis; LPS lipid A biosynthesis. Functionally, catalyzes the N-acylation of UDP-3-O-acylglucosamine using 3-hydroxyacyl-ACP as the acyl donor. Is involved in the biosynthesis of lipid A, a phosphorylated glycolipid that anchors the lipopolysaccharide to the outer membrane of the cell. In Pseudomonas fluorescens (strain Pf0-1), this protein is UDP-3-O-acylglucosamine N-acyltransferase.